A 301-amino-acid polypeptide reads, in one-letter code: Mating type protein mtA-1 (301 aa).

The segment at residues Ala-49–Arg-104 is a DNA-binding region (alpha box).

Belongs to the MATALPHA1 family.

It is found in the nucleus. Functionally, mating type proteins are sequence specific DNA-binding proteins that act as master switches in fungal differentiation by controlling gene expression in a cell type-specific fashion. Transcriptional activator that induces the transcription of alpha-specific genes. This Sordaria fimicola protein is Mating type protein mtA-1 (MTA1).